We begin with the raw amino-acid sequence, 286 residues long: Probable aquaporin PIP2-5 (286 aa).

Met1 bears the N-acetylmethionine mark. Basic and acidic residues predominate over residues 1-18 (MTKEVVGDKRSFSGKDYQ). Residues 1–23 (MTKEVVGDKRSFSGKDYQDPPPE) form a disordered region. At 1 to 38 (MTKEVVGDKRSFSGKDYQDPPPEPLFDATELGKWSFYR) the chain is on the cytoplasmic side. N6,N6-dimethyllysine is present on Lys3. Residues 39-59 (ALIAEFIATLLFLYVTIMTVI) traverse the membrane as a helical segment. Residues 60-75 (GYKSQTDPALNPDQCT) are Extracellular-facing. A helical transmembrane segment spans residues 76 to 96 (GVGVLGIAWAFGGMIFILVYC). The Cytoplasmic portion of the chain corresponds to 97–124 (TAGISGGHINPAVTFGLLLARKVTLVRA). The NPA 1 motif lies at 106–108 (NPA). Residues 125-145 (VMYMVAQCLGAICGVALVKAF) form a helical membrane-spanning segment. The Extracellular segment spans residues 146–165 (QSAYFTRYGGGANGLSDGYS). Residues 166–186 (IGTGVAAEIIGTFVLVYTVFS) form a helical membrane-spanning segment. Residues 187–200 (ATDPKRSARDSHVP) lie on the Cytoplasmic side of the membrane. Residues 201-221 (VLAPLPIGFAVFIVHLATIPI) traverse the membrane as a helical segment. At 222–248 (TGTGINPARSLGAAIIYNKDKAWDHHW) the chain is on the extracellular side. The short motif at 227–229 (NPA) is the NPA 2 element. A helical membrane pass occupies residues 249-269 (IFWVGPFAGAAIAAFYHQFVL). Residues 270 to 286 (RAGAIKALGSFRSQPHV) lie on the Cytoplasmic side of the membrane. Residues Ser279 and Ser282 each carry the phosphoserine modification.

It belongs to the MIP/aquaporin (TC 1.A.8) family. PIP (TC 1.A.8.11) subfamily. Expressed in green siliques.

The protein resides in the cell membrane. Functionally, aquaporins facilitate the transport of water and small neutral solutes across cell membranes. The sequence is that of Probable aquaporin PIP2-5 (PIP2-5) from Arabidopsis thaliana (Mouse-ear cress).